The following is a 307-amino-acid chain: Membrane protein insertase YidC 2 (307 aa).

An N-terminal signal peptide occupies residues 1–23 (MKLTLNRILFSGLALSILLTLTG). The N-palmitoyl cysteine moiety is linked to residue C24. C24 carries the S-diacylglycerol cysteine lipid modification. Helical transmembrane passes span 58–78 (LGYG…ILPL), 135–155 (LGGI…AMYF), 179–199 (VLTA…MMAV), 209–225 (TMMY…SFSL), and 231–251 (LYWL…TYLL). Residues 263-307 (YAKNPPKAYQSTSSRKDVTPSQNMEQANLPKKIKSNRNAGKQRKR) form a disordered region. The span at 271–288 (YQSTSSRKDVTPSQNMEQ) shows a compositional bias: polar residues. Basic residues predominate over residues 293-307 (KKIKSNRNAGKQRKR).

Belongs to the OXA1/ALB3/YidC family. Type 2 subfamily.

Its subcellular location is the cell membrane. Required for the insertion and/or proper folding and/or complex formation of integral membrane proteins into the membrane. Involved in integration of membrane proteins that insert both dependently and independently of the Sec translocase complex, as well as at least some lipoproteins. The protein is Membrane protein insertase YidC 2 of Streptococcus pyogenes serotype M1.